The chain runs to 791 residues: Protein FAM47A (791 aa).

Disordered stretches follow at residues 195–257, 274–409, and 449–573; these read PVSH…TRRR, EDAR…TGVC, and VKKT…SEPP. Composition is skewed to basic and acidic residues over residues 274 to 288 and 333 to 342; these read EDARAPCEGREKTTD and GESHLRLEHS. Over residues 349–358 the composition is skewed to polar residues; sequence SLRSEPSETG. Positions 449–462 are enriched in basic and acidic residues; that stretch reads VKKTKEPTEPHKSP.

This sequence belongs to the FAM47 family.

This chain is Protein FAM47A (FAM47A), found in Homo sapiens (Human).